Consider the following 421-residue polypeptide: UDP-N-acetylglucosamine 1-carboxyvinyltransferase (421 aa).

Phosphoenolpyruvate is bound at residue 23–24 (KN). Residue R92 coordinates UDP-N-acetyl-alpha-D-glucosamine. The active-site Proton donor is the C116. C116 carries the 2-(S-cysteinyl)pyruvic acid O-phosphothioketal modification. UDP-N-acetyl-alpha-D-glucosamine-binding positions include 121 to 125 (RPVDL), 161 to 164 (KVSV), D306, and I328.

Belongs to the EPSP synthase family. MurA subfamily.

The protein localises to the cytoplasm. The catalysed reaction is phosphoenolpyruvate + UDP-N-acetyl-alpha-D-glucosamine = UDP-N-acetyl-3-O-(1-carboxyvinyl)-alpha-D-glucosamine + phosphate. Its pathway is cell wall biogenesis; peptidoglycan biosynthesis. In terms of biological role, cell wall formation. Adds enolpyruvyl to UDP-N-acetylglucosamine. The protein is UDP-N-acetylglucosamine 1-carboxyvinyltransferase of Vibrio campbellii (strain ATCC BAA-1116).